The primary structure comprises 215 residues: High mobility group protein B1 (215 aa).

Residue 2–10 participates in heparin binding; it reads GKGDPKKPR. Residues 2-97 are sufficient for interaction with HAVCR2; it reads GKGDPKKPRG…KFKDPNAPKR (96 aa). Residues lysine 3, lysine 7, lysine 8, and lysine 12 each carry the N6-acetyllysine modification. The tract at residues 3–15 is LPS binding (delipidated); the sequence is KGDPKKPRGKMSS. A DNA-binding region (HMG box 1) is located at residues 9–79; the sequence is PRGKMSSYAF…RYEREMKTYI (71 aa). At cysteine 23 the chain carries Cysteine sulfonic acid (-SO3H); alternate. The cysteines at positions 23 and 45 are disulfide-linked. Residues 27–43 carry the Nuclear localization signal (NLS) 1 motif; that stretch reads HKKKHPDASVNFSEFSK. 3 positions are modified to N6-acetyllysine: lysine 28, lysine 29, and lysine 30. Lysine 28 participates in a covalent cross-link: Isoglutamyl lysine isopeptide (Lys-Gln) (interchain with Q-?). Residue serine 35 is modified to Phosphoserine. Residue lysine 43 is modified to N6-acetyllysine. Isoglutamyl lysine isopeptide (Lys-Gln) (interchain with Q-?) cross-links involve residues lysine 43 and lysine 44. Cysteine sulfonic acid (-SO3H); alternate is present on cysteine 45. Residue lysine 68 forms an Isoglutamyl lysine isopeptide (Lys-Gln) (interchain with Q-?) linkage. The segment at 76 to 95 is disordered; the sequence is KTYIPPKGETKKKFKDPNAP. The segment at 80–96 is LPS binding (Lipid A); that stretch reads PPKGETKKKFKDPNAPK. The segment covering 83–94 has biased composition (basic and acidic residues); it reads GETKKKFKDPNA. The interval 89 to 108 is cytokine-stimulating activity; sequence FKDPNAPKRPPSAFFLFCSE. Lysine 90 is modified (N6-acetyllysine). Residues 95–163 constitute a DNA-binding region (HMG box 2); the sequence is PKRPPSAFFL…KYEKDIAAYR (69 aa). Residue serine 100 is modified to Phosphoserine. Cysteine sulfonic acid (-SO3H) is present on cysteine 106. Residues lysine 127, lysine 128, lysine 141, lysine 172, lysine 173, lysine 177, and lysine 180 each carry the N6-acetyllysine modification. Residues 150–183 are binding to AGER/RAGE; sequence KLKEKYEKDIAAYRAKGKPDAAKKGVVKAEKSKK. The span at 161-179 shows a compositional bias: basic and acidic residues; that stretch reads AYRAKGKPDAAKKGVVKAE. The interval 161 to 215 is disordered; that stretch reads AYRAKGKPDAAKKGVVKAEKSKKKKEEEEDEEDEEDEEEEEDEEDEEEEEDDDDE. A Nuclear localization signal (NLS) 2 motif is present at residues 178 to 184; it reads AEKSKKK. Residue lysine 180 forms an Isoglutamyl lysine isopeptide (Lys-Gln) (interchain with Q-?) linkage. Serine 181 carries the post-translational modification ADP-ribosylserine. N6-acetyllysine is present on residues lysine 182, lysine 183, lysine 184, and lysine 185. Isoglutamyl lysine isopeptide (Lys-Gln) (interchain with Q-?) cross-links involve residues lysine 182, lysine 183, and lysine 184. The segment covering 187–215 has biased composition (acidic residues); the sequence is EEEDEEDEEDEEEEEDEEDEEEEEDDDDE.

This sequence belongs to the HMGB family. Interacts (fully reduced HMGB1) with CXCL12; probably in a 1:2 ratio involving two molecules of CXCL12, each interacting with one HMG box of HMGB1; inhibited by glycyrrhizin. Associates with the TLR4:LY96 receptor complex. Component of the RAG complex composed of core components RAG1 and RAG2, and associated component HMGB1 or HMGB2. Interacts (in cytoplasm upon starvation) with BECN1; inhibits the interaction of BECN1 and BCL2 leading to promotion of autophagy. Interacts with KPNA1; involved in nuclear import. Interacts with AGER. Interacts with SREBF1, TLR2, TLR4, TLR9, PTPRZ1, APEX1, FEN1, POLB, TERT. Interacts with IL1B, MSH2, XPA, XPC, HNF1A, TP53. Interacts with CD24; the probable CD24:SIGLEC10 complex is proposed to inhibit HGMB1-mediated tissue damage immune response. Interacts with THBD; prevents HGMB1 interaction with ACER/RAGE and inhibits HGMB1 pro-inflammatory activity. Interacts with HAVCR2; impairs HMGB1 binding to B-DNA and likely HMGB1-mediated innate immune response. Interacts with XPO1; mediating nuclear export. Interacts with receptor RAGE/AGER. Phosphorylated at serine residues. Phosphorylation in both NLS regions is required for cytoplasmic translocation followed by secretion. Post-translationally, acetylated on multiple sites upon stimulation with LPS. Acetylation on lysine residues in the nuclear localization signals (NLS 1 and NLS 2) leads to cytoplasmic localization and subsequent secretion. Acetylation on Lys-3 results in preferential binding to DNA ends and impairs DNA bending activity. In terms of processing, reduction/oxidation of cysteine residues Cys-23, Cys-45 and Cys-106 and a possible intramolecular disulfide bond involving Cys-23 and Cys-45 give rise to different redox forms with specific functional activities in various cellular compartments: 1- fully reduced HMGB1 (HMGB1C23hC45hC106h), 2- disulfide HMGB1 (HMGB1C23-C45C106h) and 3- sulfonyl HMGB1 (HMGB1C23soC45soC106so). Poly-ADP-ribosylated by PARP1 when secreted following stimulation with LPS. Post-translationally, in vitro cleavage by CASP1 is liberating a HMG box 1-containing peptide which may mediate immunogenic activity; the peptide antagonizes apoptosis-induced immune tolerance. Can be proteolytically cleaved by a thrombin:thrombomodulin complex; reduces binding to heparin and pro-inflammatory activities. In terms of processing, forms covalent cross-links mediated by transglutaminase TGM2, between a glutamine and the epsilon-amino group of a lysine residue, forming homopolymers and heteropolymers.

The protein resides in the nucleus. Its subcellular location is the chromosome. It localises to the cytoplasm. It is found in the secreted. The protein localises to the cell membrane. The protein resides in the endosome. Its subcellular location is the endoplasmic reticulum-Golgi intermediate compartment. Its function is as follows. Multifunctional redox sensitive protein with various roles in different cellular compartments. In the nucleus is one of the major chromatin-associated non-histone proteins and acts as a DNA chaperone involved in replication, transcription, chromatin remodeling, V(D)J recombination, DNA repair and genome stability. Proposed to be an universal biosensor for nucleic acids. Promotes host inflammatory response to sterile and infectious signals and is involved in the coordination and integration of innate and adaptive immune responses. In the cytoplasm functions as a sensor and/or chaperone for immunogenic nucleic acids implicating the activation of TLR9-mediated immune responses, and mediates autophagy. Acts as a danger-associated molecular pattern (DAMP) molecule that amplifies immune responses during tissue injury. Released to the extracellular environment can bind DNA, nucleosomes, IL-1 beta, CXCL12, AGER isoform 2/sRAGE, lipopolysaccharide (LPS) and lipoteichoic acid (LTA), and activates cells through engagement of multiple surface receptors. In the extracellular compartment fully reduced HMGB1 (released by necrosis) acts as a chemokine, disulfide HMGB1 (actively secreted) as a cytokine, and sulfonyl HMGB1 (released from apoptotic cells) promotes immunological tolerance. Has proangiogenic activity. May be involved in platelet activation. Binds to phosphatidylserine and phosphatidylethanolamide. Bound to RAGE mediates signaling for neuronal outgrowth. May play a role in accumulation of expanded polyglutamine (polyQ) proteins. Nuclear functions are attributed to fully reduced HGMB1. Associates with chromatin and binds DNA with a preference to non-canonical DNA structures such as single-stranded DNA, DNA-containing cruciforms or bent structures, supercoiled DNA and ZDNA. Can bent DNA and enhance DNA flexibility by looping thus providing a mechanism to promote activities on various gene promoters by enhancing transcription factor binding and/or bringing distant regulatory sequences into close proximity. May be involved in nucleotide excision repair (NER), mismatch repair (MMR) and base excision repair (BER) pathways, and double strand break repair such as non-homologous end joining (NHEJ). Involved in V(D)J recombination by acting as a cofactor of the RAG complex: acts by stimulating cleavage and RAG protein binding at the 23 bp spacer of conserved recombination signal sequences (RSS). In vitro can displace histone H1 from highly bent DNA. Can restructure the canonical nucleosome leading to relaxation of structural constraints for transcription factor-binding. Enhances binding of sterol regulatory element-binding proteins (SREBPs) such as SREBF1 to their cognate DNA sequences and increases their transcriptional activities. Facilitates binding of TP53 to DNA. May be involved in mitochondrial quality control and autophagy in a transcription-dependent fashion implicating HSPB1. Can modulate the activity of the telomerase complex and may be involved in telomere maintenance. In terms of biological role, in the cytoplasm proposed to dissociate the BECN1:BCL2 complex via competitive interaction with BECN1 leading to autophagy activation. Involved in oxidative stress-mediated autophagy. Can protect BECN1 and ATG5 from calpain-mediated cleavage and thus proposed to control their proautophagic and proapoptotic functions and to regulate the extent and severity of inflammation-associated cellular injury. In myeloid cells has a protective role against endotoxemia and bacterial infection by promoting autophagy. Involved in endosomal translocation and activation of TLR9 in response to CpG-DNA in macrophages. Functionally, in the extracellular compartment (following either active secretion or passive release)involved in regulation of the inflammatory response. Fully reduced HGMB1 (which subsequently gets oxidized after release) in association with CXCL12 mediates the recruitment of inflammatory cells during the initial phase of tissue injury; the CXCL12:HMGB1 complex triggers CXCR4 homodimerization. Induces the migration of monocyte-derived immature dendritic cells and seems to regulate adhesive and migratory functions of neutrophils implicating AGER/RAGE and ITGAM. Can bind to various types of DNA and RNA including microbial unmethylated CpG-DNA to enhance the innate immune response to nucleic acids. Proposed to act in promiscuous DNA/RNA sensing which cooperates with subsequent discriminative sensing by specific pattern recognition receptors. Promotes extracellular DNA-induced AIM2 inflammasome activation implicating AGER/RAGE. Disulfide HMGB1 binds to transmembrane receptors, such as AGER/RAGE, TLR2, TLR4 and probably TREM1, thus activating their signal transduction pathways. Mediates the release of cytokines/chemokines such as TNF, IL-1, IL-6, IL-8, CCL2, CCL3, CCL4 and CXCL10. Promotes secretion of interferon-gamma by macrophage-stimulated natural killer (NK) cells in concert with other cytokines like IL-2 or IL-12. TLR4 is proposed to be the primary receptor promoting macrophage activation and signaling through TLR4 seems to implicate LY96/MD-2. In bacterial LPS- or LTA-mediated inflammatory responses binds to the endotoxins and transfers them to CD14 for signaling to the respective TLR4:LY96 and TLR2 complexes. Contributes to tumor proliferation by association with ACER/RAGE. Can bind to IL1-beta and signals through the IL1R1:IL1RAP receptor complex. Binding to class A CpG activates cytokine production in plasmacytoid dendritic cells implicating TLR9, MYD88 and AGER/RAGE and can activate autoreactive B cells. Via HMGB1-containing chromatin immune complexes may also promote B cell responses to endogenous TLR9 ligands through a B-cell receptor (BCR)-dependent and ACER/RAGE-independent mechanism. Inhibits phagocytosis of apoptotic cells by macrophages; the function is dependent on poly-ADP-ribosylation and involves binding to phosphatidylserine on the cell surface of apoptotic cells. In adaptive immunity may be involved in enhancing immunity through activation of effector T-cells and suppression of regulatory T (TReg) cells. In contrast, without implicating effector or regulatory T-cells, required for tumor infiltration and activation of T-cells expressing the lymphotoxin LTA:LTB heterotrimer thus promoting tumor malignant progression. Also reported to limit proliferation of T-cells. Released HMGB1:nucleosome complexes formed during apoptosis can signal through TLR2 to induce cytokine production. Involved in induction of immunological tolerance by apoptotic cells; its pro-inflammatory activities when released by apoptotic cells are neutralized by reactive oxygen species (ROS)-dependent oxidation specifically on Cys-106. During macrophage activation by activated lymphocyte-derived self apoptotic DNA (ALD-DNA) promotes recruitment of ALD-DNA to endosomes. This chain is High mobility group protein B1 (HMGB1), found in Bos taurus (Bovine).